The sequence spans 37 residues: Large ribosomal subunit protein bL36 (37 aa).

The protein belongs to the bacterial ribosomal protein bL36 family.

This is Large ribosomal subunit protein bL36 from Staphylococcus saprophyticus subsp. saprophyticus (strain ATCC 15305 / DSM 20229 / NCIMB 8711 / NCTC 7292 / S-41).